The primary structure comprises 1133 residues: MWSLLLLAALVGQGFALKNVFDMRIQLPHSVNFGETSVSGYTEFPPLSLQEAEQLVPESSCNMDNHQSLSTINKLTKVIWRKKANQESANQNSFEVVESEVSFKGLCMLKHRMVEESYRNRRSVICYDLACNSTFCKPTVYMIVPIHACNMMKSCLIGLGPYRIQVVYERTYCTTGILTEGKCFVPDKAVVSALKRGMYAIASIETICFFIHQKGNTYKIVTAITSAMGSKCNNTDTKVQGYYICIIGGNSAPVYAPAGEDFRAMEVFSGIITSPHGEDHDLPGEEIATYQISGQIEAKIPHTVSSKNLKLTAFAGIPSYSSTSILAASEDGRFIFSPGLFPNLNQSVCDNNALPLIWRGLIDLTGYYEAVHPCNVFCVLSGPGASCEAFSEGGIFNITSPMCLVSKQNRFRAAEQQISFVCQRVDMDIIVYCNGQKKTILTKTLVIGQCIYTITSLFSLLPGVAHSIAIELCVPGFHGWATAALLITFCFGWVLIPACTLAILLVLKFFANILHTSNQENRFKAILRKIKEEFEKTKGSMVCEICKYECETLKELKAHNLSCVQGECPYCFTHCEPTETAIQAHYKVCQATHRFREDLKKTVTPQNIGPGCYRTLNLFRYKSRCYILTMWTLLLIIESILWAASAAEIPLVPLWTDNAHGVGSVPMHTDLELDFSLPSSSKYTYKRHLTNPVNDQQSVSLHIEIESQGIGAAVHHLGHWYDARLNLKTSFHCYGACTKYQYPWHTAKCHFEKDYEYENSWACNPPDCPGVGTGCTACGLYLDQLKPVGTAFKIISVRYSRKVCVQFGEEHLCKTIDMNDCFVTRHAKICIIGTVSKFSQGDTLLFLGPMEGGGIIFKHWCTSTCHFGDPGDVMGPKDKPFICPEFPGQFRKKCNFATTPVCEYDGNIISGYKKVLATIDSFQSFNTSNIHFTDERIEWRDPDGMLRDHINIVISKDIDFENLAENPCKVGLQAANIEGAWGSGVGFTLTCKVSLTECPTFLTSIKACDMAICYGAESVTLSRGQNTVKITGKGGHSGSSFKCCHGKECSSTGLQASAPHLDKVNGISELENEKVYDDGAPECGITCWFKKSGEWVMGIINGNWVVLIVLCVLLLFSLILLSILCPVRKHKKS.

The signal sequence occupies residues 1–16 (MWSLLLLAALVGQGFA). Residues 17 to 484 (LKNVFDMRIQ…PGFHGWATAA (468 aa)) are Lumenal-facing. 10 cysteine pairs are disulfide-bonded: Cys61/Cys155, Cys107/Cys126, Cys131/Cys136, Cys173/Cys183, Cys208/Cys245, Cys232/Cys349, Cys374/Cys433, Cys378/Cys387, Cys403/Cys422, and Cys450/Cys473. Residue Asn132 is glycosylated (N-linked (GlcNAc...) asparagine; by host). Residues Asn233 and Asn345 are each glycosylated (N-linked (GlcNAc...) asparagine; by host). Asn397 carries an N-linked (GlcNAc...) asparagine; by host glycan. Residues 485–504 (LLITFCFGWVLIPACTLAIL) traverse the membrane as a helical segment. The Cytoplasmic segment spans residues 505–626 (LVLKFFANIL…NLFRYKSRCY (122 aa)). A binding to the ribonucleoprotein region spans residues 514–531 (LHTSNQENRFKAILRKIK). 2 consecutive CCHC-type zinc fingers follow at residues 543 to 563 (CEIC…NLSC) and 568 to 589 (CPYC…YKVC). Binding to the ribonucleoprotein stretches follow at residues 586–603 (YKVC…KKTV), 590–601 (QATHRFREDLKK), and 609–623 (GPGC…RYKS). An ITAM domain is found at 609–632 (GPGCYRTLNLFRYKSRCYILTMWT). The short motif at 613–616 (YRTL) is the YxxL element. A helical membrane pass occupies residues 627–647 (ILTMWTLLLIIESILWAASAA). Topologically, residues 648–1105 (EIPLVPLWTD…VMGIINGNWV (458 aa)) are lumenal. 8 cysteine pairs are disulfide-bonded: Cys733-Cys768, Cys737-Cys775, Cys749-Cys883, Cys763-Cys894, Cys778-Cys902, Cys804-Cys813, Cys821-Cys830, and Cys861-Cys865. The fusion loop stretch occupies residues 755-775 (YEYENSWACNPPDCPGVGTGC). A glycan (N-linked (GlcNAc...) asparagine; by host) is linked at Asn926. 5 disulfide bridges follow: Cys968-Cys998, Cys991-Cys1043, Cys1008-Cys1013, Cys1044-Cys1049, and Cys1083-Cys1087. Residues 1106-1125 (VLIVLCVLLLFSLILLSILC) traverse the membrane as a helical segment. Positions 1120 to 1133 (LLSILCPVRKHKKS) are binding to the ribonucleoprotein. Topologically, residues 1126–1133 (PVRKHKKS) are cytoplasmic.

It belongs to the hantavirus envelope glycoprotein family. As to quaternary structure, homodimer. Homotetramer; forms heterotetrameric Gn-Gc spikes in the pre-fusion conformation. Interacts (via C-terminus) with the nucleoprotein. Interacts with host TUFM; this interaction contributes to the virus-induced degradation of mitochondria by autophagy, which leads to degradation of host MAVS and inhibition of type I interferon (IFN) responses. Interacts with host MAP1LC3B; this interaction contributes to the virus-induced degradation of mitochondria by autophagy, which leads to degradation of host MAVS and inhibition of type I interferon (IFN) responses. In terms of assembly, homodimer. Homotetramer; forms heterotetrameric Gn-Gc spikes in the pre-fusion conformation. Homotrimer; forms homotrimer in the post-fusion conformation at acidic pH. Interacts (via C-terminus) with the nucleoprotein. Envelope polyprotein precursor is quickly cleaved in vivo just after synthesis, presumably by host signal peptidase.

Its subcellular location is the virion membrane. The protein localises to the host cell surface. It is found in the host Golgi apparatus membrane. It localises to the host endoplasmic reticulum membrane. The protein resides in the host mitochondrion. Forms homotetramers with glycoprotein C at the surface of the virion. Attaches the virion to host cell receptors including integrin ITGAV/ITGB3. This attachment induces virion internalization predominantly through clathrin-dependent endocytosis. Mediates the assembly and budding of infectious virus particles through its interaction with the nucleocapsid protein and the viral genome. May dysregulate normal immune and endothelial cell responses through an ITAM motif. Translocates to mitochondria, binds to host TUFM and recruits MAP1LC3B. These interactions induce mitochondrial autophagy and therefore destruction of host MAVS leading to inhibition of type I interferon (IFN) responses. Concomitant breakdown of glycoprotein N is apparently prevented by the nucleoprotein that may inhibit Gn-stimulated autophagosome-lysosome fusion. Interacts with the viral genomic RNA. In terms of biological role, forms homotetramers with glycoprotein N at the surface of the virion. Attaches the virion to host cell receptors including integrin ITGAV/ITGB3. This attachment induces virion internalization predominantly through clathrin-dependent endocytosis. Class II fusion protein that promotes fusion of viral membrane with host endosomal membrane after endocytosis of the virion. In Homo sapiens (Human), this protein is Envelopment polyprotein (GP).